The chain runs to 378 residues: S-adenosylmethionine:tRNA ribosyltransferase-isomerase (378 aa).

It belongs to the QueA family. Monomer.

It localises to the cytoplasm. It carries out the reaction 7-aminomethyl-7-carbaguanosine(34) in tRNA + S-adenosyl-L-methionine = epoxyqueuosine(34) in tRNA + adenine + L-methionine + 2 H(+). It functions in the pathway tRNA modification; tRNA-queuosine biosynthesis. Its function is as follows. Transfers and isomerizes the ribose moiety from AdoMet to the 7-aminomethyl group of 7-deazaguanine (preQ1-tRNA) to give epoxyqueuosine (oQ-tRNA). The sequence is that of S-adenosylmethionine:tRNA ribosyltransferase-isomerase from Prochlorococcus marinus (strain MIT 9312).